Consider the following 560-residue polypeptide: Arginine--tRNA ligase (560 aa).

Residues 122-132 carry the 'HIGH' region motif; the sequence is ANPNGPLHVGH.

The protein belongs to the class-I aminoacyl-tRNA synthetase family.

Its subcellular location is the cytoplasm. It catalyses the reaction tRNA(Arg) + L-arginine + ATP = L-arginyl-tRNA(Arg) + AMP + diphosphate. The protein is Arginine--tRNA ligase of Methanosphaera stadtmanae (strain ATCC 43021 / DSM 3091 / JCM 11832 / MCB-3).